The chain runs to 291 residues: Probable L-ascorbate peroxidase 3, peroxisomal (291 aa).

Histidine 41 serves as the catalytic Proton acceptor. The segment at 114–133 (YVPGRRDSSDSPEEGRLPDA) is disordered. Over residues 116–133 (PGRRDSSDSPEEGRLPDA) the composition is skewed to basic and acidic residues. Residue histidine 161 participates in heme b binding. K(+) is bound by residues threonine 162, threonine 178, and aspartate 185. A helical membrane pass occupies residues 263-283 (LLMQTAAGVAVAAAVVAWAYL).

The protein belongs to the peroxidase family. Ascorbate peroxidase subfamily. Requires heme b as cofactor. As to expression, expressed in stems.

It is found in the peroxisome membrane. It carries out the reaction L-ascorbate + H2O2 = L-dehydroascorbate + 2 H2O. Its function is as follows. Plays a key role in hydrogen peroxide removal. This chain is Probable L-ascorbate peroxidase 3, peroxisomal, found in Oryza sativa subsp. japonica (Rice).